We begin with the raw amino-acid sequence, 271 residues long: Formamidopyrimidine-DNA glycosylase (271 aa).

P2 (schiff-base intermediate with DNA) is an active-site residue. E3 acts as the Proton donor in catalysis. K57 (proton donor; for beta-elimination activity) is an active-site residue. Residues H90, R109, and K151 each coordinate DNA. The FPG-type zinc-finger motif lies at 236-270 (HVYGRGGETCTQCGHLLSEIKLGQRATVFCSLCQK). R260 acts as the Proton donor; for delta-elimination activity in catalysis.

The protein belongs to the FPG family. Monomer. Requires Zn(2+) as cofactor.

It catalyses the reaction Hydrolysis of DNA containing ring-opened 7-methylguanine residues, releasing 2,6-diamino-4-hydroxy-5-(N-methyl)formamidopyrimidine.. The enzyme catalyses 2'-deoxyribonucleotide-(2'-deoxyribose 5'-phosphate)-2'-deoxyribonucleotide-DNA = a 3'-end 2'-deoxyribonucleotide-(2,3-dehydro-2,3-deoxyribose 5'-phosphate)-DNA + a 5'-end 5'-phospho-2'-deoxyribonucleoside-DNA + H(+). Involved in base excision repair of DNA damaged by oxidation or by mutagenic agents. Acts as a DNA glycosylase that recognizes and removes damaged bases. Has a preference for oxidized purines, such as 7,8-dihydro-8-oxoguanine (8-oxoG). Has AP (apurinic/apyrimidinic) lyase activity and introduces nicks in the DNA strand. Cleaves the DNA backbone by beta-delta elimination to generate a single-strand break at the site of the removed base with both 3'- and 5'-phosphates. This Shewanella halifaxensis (strain HAW-EB4) protein is Formamidopyrimidine-DNA glycosylase.